Here is a 156-residue protein sequence, read N- to C-terminus: Adult-specific rigid cuticular protein 15.5 (156 aa).

In terms of domain architecture, Chitin-binding type R&amp;R spans 23-84 (IGNYAFNYGT…SVKTNEPGTA (62 aa)).

Component of the rigid cuticle of the spider. This chain is Adult-specific rigid cuticular protein 15.5, found in Araneus diadematus (European garden spider).